A 503-amino-acid chain; its full sequence is Anhydrotetracycline monooxygenase (503 aa).

This sequence belongs to the PheA/TfdB FAD monooxygenase family. The cofactor is FAD.

It carries out the reaction anhydrotetracycline + NADPH + O2 + H(+) = 5a,11a-dehydrotetracycline + NADP(+) + H2O. It functions in the pathway antibiotic biosynthesis; oxytetracycline biosynthesis. Its function is as follows. Catalyzes hydroxylation of the anthracycline structure at position C-6 during the biosynthesis of oxytetracyline. This is Anhydrotetracycline monooxygenase from Streptomyces rimosus.